A 275-amino-acid chain; its full sequence is Ribosome biogenesis protein RLP7 (275 aa).

The interval 14-45 (KRKNNDRKRLEKQEQARQRQLEQKKKNDQRSK) is disordered. The span at 20–44 (RKRLEKQEQARQRQLEQKKKNDQRS) shows a compositional bias: basic and acidic residues.

This sequence belongs to the universal ribosomal protein uL30 family.

It is found in the nucleus. It localises to the nucleolus. Its function is as follows. Involved in the biogenesis of the 60S ribosomal subunit. May act as a specificity factor that binds precursor rRNAs and tethers the enzymes that carry out the early 5' to 3' exonucleolytic reactions that generate the mature rRNAs. The sequence is that of Ribosome biogenesis protein RLP7 (RLP7) from Debaryomyces hansenii (strain ATCC 36239 / CBS 767 / BCRC 21394 / JCM 1990 / NBRC 0083 / IGC 2968) (Yeast).